The sequence spans 931 residues: Protein unc-45 homolog B (931 aa).

TPR repeat units lie at residues 6–39 (AVQL…TKDK), 43–76 (ATLY…NSSD), and 77–110 (IKAL…EPRN). ARM repeat units follow at residues 169-208 (EAGA…GMCS), 211-250 (QARA…AIID), and 751-790 (DKLR…NMVL).

Interacts with HSP90 in an ATP-independent manner. Interacts with UBE4B; the interaction may target UNC45B for proteasomal degradation. As to expression, expressed in eye lens tissues. Expressed in muscle (at protein level).

It is found in the cytoplasm. It localises to the myofibril. The protein resides in the sarcomere. The protein localises to the z line. Its subcellular location is the a band. It is found in the perinuclear region. It localises to the cytosol. Acts as a co-chaperone for HSP90 and is required for proper folding of the myosin motor domain. Plays a role in sarcomere formation during muscle cell development. Is necessary for normal early lens development. The protein is Protein unc-45 homolog B of Homo sapiens (Human).